The chain runs to 329 residues: D-alanine--D-alanine ligase (329 aa).

The 207-residue stretch at 120–326 folds into the ATP-grasp domain; it reads KLWYDALDIP…FHEFLEDCIN (207 aa). 150-205 contacts ATP; sequence AFEKWGKVFVKAARQGSSVGCYSVAEKQAIAKAVNDAFGYSDQVLVEKAVKPRELE. Residues aspartate 280, glutamate 293, and asparagine 295 each coordinate Mg(2+).

Belongs to the D-alanine--D-alanine ligase family. Requires Mg(2+) as cofactor. The cofactor is Mn(2+).

Its subcellular location is the cytoplasm. It carries out the reaction 2 D-alanine + ATP = D-alanyl-D-alanine + ADP + phosphate + H(+). It functions in the pathway cell wall biogenesis; peptidoglycan biosynthesis. Cell wall formation. This chain is D-alanine--D-alanine ligase, found in Vibrio parahaemolyticus serotype O3:K6 (strain RIMD 2210633).